The chain runs to 348 residues: Probable dual-specificity RNA methyltransferase RlmN (348 aa).

The active-site Proton acceptor is Glu90. A Radical SAM core domain is found at 96-324 (AAERLTVCVS…ASVRHTRGLE (229 aa)). A disulfide bond links Cys103 and Cys329. Residues Cys110, Cys114, and Cys117 each coordinate [4Fe-4S] cluster. Residues 157 to 158 (GE), Ser187, 210 to 212 (SLH), and Asn286 each bind S-adenosyl-L-methionine. Cys329 (S-methylcysteine intermediate) is an active-site residue.

Belongs to the radical SAM superfamily. RlmN family. The cofactor is [4Fe-4S] cluster.

It localises to the cytoplasm. The enzyme catalyses adenosine(2503) in 23S rRNA + 2 reduced [2Fe-2S]-[ferredoxin] + 2 S-adenosyl-L-methionine = 2-methyladenosine(2503) in 23S rRNA + 5'-deoxyadenosine + L-methionine + 2 oxidized [2Fe-2S]-[ferredoxin] + S-adenosyl-L-homocysteine. The catalysed reaction is adenosine(37) in tRNA + 2 reduced [2Fe-2S]-[ferredoxin] + 2 S-adenosyl-L-methionine = 2-methyladenosine(37) in tRNA + 5'-deoxyadenosine + L-methionine + 2 oxidized [2Fe-2S]-[ferredoxin] + S-adenosyl-L-homocysteine. Its function is as follows. Specifically methylates position 2 of adenine 2503 in 23S rRNA and position 2 of adenine 37 in tRNAs. The sequence is that of Probable dual-specificity RNA methyltransferase RlmN from Gloeobacter violaceus (strain ATCC 29082 / PCC 7421).